The primary structure comprises 184 residues: Protein GrpE (184 aa).

Positions 1-26 (MANEQNEQAQDIQNEQVEQSNEQTQA) are enriched in polar residues. Positions 1–34 (MANEQNEQAQDIQNEQVEQSNEQTQAEGVEQAND) are disordered.

Belongs to the GrpE family. In terms of assembly, homodimer.

It localises to the cytoplasm. Participates actively in the response to hyperosmotic and heat shock by preventing the aggregation of stress-denatured proteins, in association with DnaK and GrpE. It is the nucleotide exchange factor for DnaK and may function as a thermosensor. Unfolded proteins bind initially to DnaJ; upon interaction with the DnaJ-bound protein, DnaK hydrolyzes its bound ATP, resulting in the formation of a stable complex. GrpE releases ADP from DnaK; ATP binding to DnaK triggers the release of the substrate protein, thus completing the reaction cycle. Several rounds of ATP-dependent interactions between DnaJ, DnaK and GrpE are required for fully efficient folding. The sequence is that of Protein GrpE from Acinetobacter baumannii (strain AB307-0294).